The chain runs to 304 residues: Cell surface-binding protein OPG105 (304 aa).

Residues 1-235 form the Alpha-carbonic anhydrase domain; sequence MPQQLSPINI…NDDTQVYYSG (235 aa). Over 1–275 the chain is Virion surface; it reads MPQQLSPINI…YQKYIEGNKT (275 aa). A helical membrane pass occupies residues 276–294; it reads FAIIAIVFVFILTAILFLM. Residues 295–304 are Intravirion-facing; that stretch reads SQRYSREKQN.

It belongs to the alpha-carbonic anhydrase family. In terms of assembly, homodimer; disulfide-linked. Apparently non-glycosylated.

The protein localises to the virion membrane. Binds to chondroitin sulfate on the cell surface to provide virion attachment to target cell. In Monkeypox virus (strain Zaire-96-I-16) (MPX), this protein is Cell surface-binding protein OPG105 (OPG105).